Consider the following 269-residue polypeptide: tRNA pseudouridine synthase A (269 aa).

D55 acts as the Nucleophile in catalysis. Y111 contributes to the substrate binding site.

It belongs to the tRNA pseudouridine synthase TruA family.

The enzyme catalyses uridine(38/39/40) in tRNA = pseudouridine(38/39/40) in tRNA. In terms of biological role, formation of pseudouridine at positions 38, 39 and 40 in the anticodon stem and loop of transfer RNAs. This is tRNA pseudouridine synthase A from Methanosarcina acetivorans (strain ATCC 35395 / DSM 2834 / JCM 12185 / C2A).